A 594-amino-acid polypeptide reads, in one-letter code: Protein TRANSPORT INHIBITOR RESPONSE 1 (594 aa).

Residues 3-50 (KRIALSFPEEVLEHVFSFIQLDKDRNSVSLVCKSWYEIERWCRRKVFI) form the F-box domain. K74 is a binding site for 1D-myo-inositol hexakisphosphate. Residues 81-82 (DF) are interaction with auxin-responsive proteins. 1D-myo-inositol hexakisphosphate contacts are provided by residues 113–114 (KR) and R344. An interaction with auxin-responsive proteins region spans residues 347-352 (PSEPFV). 401–403 (RFR) lines the 1D-myo-inositol hexakisphosphate pocket. R403 contributes to the (indol-3-yl)acetate binding site. Residues 405–409 (CIIEP) form an interaction with auxin-responsive proteins region. Position 436 (R436) interacts with 1D-myo-inositol hexakisphosphate. Position 438–439 (438–439 (SL)) interacts with (indol-3-yl)acetate. The interval 464 to 465 (AF) is interaction with auxin-responsive proteins. 1D-myo-inositol hexakisphosphate-binding positions include 484-485 (RK) and R509.

In terms of assembly, interacts with auxin. Part of a SCF E3 ubiquitin ligase complex SCF(TIR1) composed of SKP1, CUL1, RBX1 and TIR1. SCF(TIR1) interacts with the COP9 signalosome (CSN) complex. Interacts with Aux/IAA proteins (IAA3, IAA7, IAA12 and IAA17) in an auxin-dependent manner. The interaction with IAA3, a negative regulator of auxin responses, is promoted by auxin, but repressed by juglon (5-hydroxy-1,4-naphthoquinone). Interactions with auxin-responsive proteins is inactivated by auxin antagonists. In terms of tissue distribution, expressed in roots, stems, leaves and flowers. In adult plants, mostly expressed in floral stigma, anther filaments, abscission zones and vascular tissues.

The protein resides in the nucleus. Its pathway is protein modification; protein ubiquitination. Auxin receptor that mediates Aux/IAA proteins proteasomal degradation and auxin-regulated transcription. The SCF(TIR1) E3 ubiquitin ligase complex is involved in auxin-mediated signaling pathway that regulate root and hypocotyl growth, lateral root formation, cell elongation, and gravitropism. Appears to allow pericycle cells to overcome G2 arrest prior to lateral root development. Plays a role in ethylene signaling in roots. Confers sensitivity to the virulent bacterial pathogen P.syringae. The sequence is that of Protein TRANSPORT INHIBITOR RESPONSE 1 (TIR1) from Arabidopsis thaliana (Mouse-ear cress).